Consider the following 116-residue polypeptide: MSWRGRSTYRPRPRRYVEPPEMIGPMRPEQFSDEVEPATPEEGEPATQRQDPAAAQEGQDEGASAGQGPKPEAHSQEQGHPQTGCECEDGPDGQEMDPPNPEEVKTPEEGEKQSQC.

The tract at residues 1–116 (MSWRGRSTYR…PEEGEKQSQC (116 aa)) is disordered. 2 stretches are compositionally biased toward acidic residues: residues 31–44 (FSDE…EEGE) and 86–95 (ECEDGPDGQE). Residues 102–116 (EEVKTPEEGEKQSQC) are compositionally biased toward basic and acidic residues.

It belongs to the GAGE family.

The polypeptide is G antigen 2A (GAGE2A) (Homo sapiens (Human)).